We begin with the raw amino-acid sequence, 200 residues long: Holliday junction branch migration complex subunit RuvA (200 aa).

The domain I stretch occupies residues 1–65 (MYEYIKGTLT…ETEHVLYGFS (65 aa)). A domain II region spans residues 66–144 (SRAERECFRL…TLMPLYLEEP (79 aa)). The segment at 145–149 (VVPSS) is flexible linker. Positions 150–200 (TANSSFKEGIGALMNLGFSRLAADRMMTEAVKELSEEASVAELLPIALRKS) are domain III.

The protein belongs to the RuvA family. In terms of assembly, homotetramer. Forms an RuvA(8)-RuvB(12)-Holliday junction (HJ) complex. HJ DNA is sandwiched between 2 RuvA tetramers; dsDNA enters through RuvA and exits via RuvB. An RuvB hexamer assembles on each DNA strand where it exits the tetramer. Each RuvB hexamer is contacted by two RuvA subunits (via domain III) on 2 adjacent RuvB subunits; this complex drives branch migration. In the full resolvosome a probable DNA-RuvA(4)-RuvB(12)-RuvC(2) complex forms which resolves the HJ.

The protein resides in the cytoplasm. Functionally, the RuvA-RuvB-RuvC complex processes Holliday junction (HJ) DNA during genetic recombination and DNA repair, while the RuvA-RuvB complex plays an important role in the rescue of blocked DNA replication forks via replication fork reversal (RFR). RuvA specifically binds to HJ cruciform DNA, conferring on it an open structure. The RuvB hexamer acts as an ATP-dependent pump, pulling dsDNA into and through the RuvAB complex. HJ branch migration allows RuvC to scan DNA until it finds its consensus sequence, where it cleaves and resolves the cruciform DNA. In Chlamydia trachomatis serovar L2 (strain ATCC VR-902B / DSM 19102 / 434/Bu), this protein is Holliday junction branch migration complex subunit RuvA.